Here is a 127-residue protein sequence, read N- to C-terminus: uncharacterized protein (127 aa).

Residues 5-25 (ILGITIAFIILLLTTVAILFS) form a helical membrane-spanning segment.

Its subcellular location is the membrane. This is an uncharacterized protein from Mycoplasma genitalium (strain ATCC 33530 / DSM 19775 / NCTC 10195 / G37) (Mycoplasmoides genitalium).